Reading from the N-terminus, the 1037-residue chain is Signal-induced proliferation-associated protein 1 (1037 aa).

Positions 1–85 are disordered; the sequence is MWAGGVGSPR…ASRPAATPTR (85 aa). Phosphothreonine is present on Thr62. 4 positions are modified to phosphoserine: Ser65, Ser178, Ser299, and Ser309. The Rap-GAP domain occupies 316 to 534; the sequence is LLTLDEQVLS…RTRQQYLQDL (219 aa). The PDZ domain maps to 682–758; sequence ELALPRDGQG…VCVTVLPPDE (77 aa). 2 positions are modified to phosphoserine: Ser812 and Ser834. Disordered regions lie at residues 830-849 and 855-898; these read HNSLSSGSSLSDEAPVLPNT and LVTT…ASIL. Residues 871 to 881 are compositionally biased toward low complexity; it reads PPSQDQSGSPS. A Phosphoserine modification is found at Ser907. The disordered stretch occupies residues 943–969; that stretch reads REGQPISESGDPKEALKCDSEPEPGSL. The span at 952-962 shows a compositional bias: basic and acidic residues; it reads GDPKEALKCDS. Positions 968–1025 form a coiled coil; the sequence is SLSEKVSHLESMLWKLQEDLQREKADRAALEEEVRSLRHNNQRLLAESESAATRLLLA.

Interacts with RRP1B; the interaction leads to inhibition of SIPA1 GTPase activity. As to expression, preferentially expressed in both fetal and adult lymphohematopoietic tissues.

Its subcellular location is the nucleus. The protein localises to the cytoplasm. The protein resides in the perinuclear region. It is found in the endomembrane system. GTPase activator for the nuclear Ras-related regulatory proteins Rap1, Rsr1 and Ran in vitro, converting them to the putatively inactive GDP-bound state. Affects cell cycle progression. The chain is Signal-induced proliferation-associated protein 1 (Sipa1) from Mus musculus (Mouse).